Consider the following 552-residue polypeptide: Chaperonin GroEL (552 aa).

ATP is bound by residues 30–33, K51, 87–91, G415, 479–481, and D495; these read TLGP, DGTTT, and NAA.

It belongs to the chaperonin (HSP60) family. As to quaternary structure, forms a cylinder of 14 subunits composed of two heptameric rings stacked back-to-back. Interacts with the co-chaperonin GroES.

The protein localises to the cytoplasm. The enzyme catalyses ATP + H2O + a folded polypeptide = ADP + phosphate + an unfolded polypeptide.. Functionally, together with its co-chaperonin GroES, plays an essential role in assisting protein folding. The GroEL-GroES system forms a nano-cage that allows encapsulation of the non-native substrate proteins and provides a physical environment optimized to promote and accelerate protein folding. The sequence is that of Chaperonin GroEL from Nitrosospira multiformis (strain ATCC 25196 / NCIMB 11849 / C 71).